Here is a 457-residue protein sequence, read N- to C-terminus: MDHLPIFCQLRDRDCLIVGGGDVAERKARLLLEAGARLTVNALTFIPQFTVWADEGMLTLVEGPFDEALLDPCWLAIAATDDDAVNQHVSEAAESRRIFCNVVDAPKAASFIMPSIIDRSPLMVAVSSGGTSPVLARLLREKLESILPQHLGQVAQYAGQLRARVKKQFITMGERRRFWEKFFVNDRLAQSLANADEKAVNATTEQLFSEPLDHRGEVVLVGAGPGDAGLLTLKGLQQIQQADIVVYDRLVSDDIMNLVRRDADRVFVGKRAGYHCVPQEEINQILLREAQKGKRVVRLKGGDPFIFGRGGEELETLCHAGIPFSVVPGITAASGCSAYSGLPLTHRDYAQSVRLVTGHLKTGGELDWENLAAEKQTLVFYMGLNQAATIQEKLIAFGMQADMPVALVENGTSIKQRVVNGELAQLGELAKQVASPALIIVGRVVGLRDKLNWFSSH.

Residues 1 to 204 are precorrin-2 dehydrogenase /sirohydrochlorin ferrochelatase; that stretch reads MDHLPIFCQL…ADEKAVNATT (204 aa). NAD(+)-binding positions include 22-23 and 43-44; these read DV and LT. S128 carries the post-translational modification Phosphoserine. Residues 216 to 457 form a uroporphyrinogen-III C-methyltransferase region; it reads GEVVLVGAGP…RDKLNWFSSH (242 aa). P225 lines the S-adenosyl-L-methionine pocket. D248 functions as the Proton acceptor in the catalytic mechanism. K270 functions as the Proton donor in the catalytic mechanism. Residues 301–303, I306, 331–332, M382, and G411 contribute to the S-adenosyl-L-methionine site; these read GGD and TA.

It in the N-terminal section; belongs to the precorrin-2 dehydrogenase / sirohydrochlorin ferrochelatase family. This sequence in the C-terminal section; belongs to the precorrin methyltransferase family.

The catalysed reaction is uroporphyrinogen III + 2 S-adenosyl-L-methionine = precorrin-2 + 2 S-adenosyl-L-homocysteine + H(+). The enzyme catalyses precorrin-2 + NAD(+) = sirohydrochlorin + NADH + 2 H(+). It carries out the reaction siroheme + 2 H(+) = sirohydrochlorin + Fe(2+). It functions in the pathway cofactor biosynthesis; adenosylcobalamin biosynthesis; precorrin-2 from uroporphyrinogen III: step 1/1. It participates in cofactor biosynthesis; adenosylcobalamin biosynthesis; sirohydrochlorin from precorrin-2: step 1/1. Its pathway is porphyrin-containing compound metabolism; siroheme biosynthesis; precorrin-2 from uroporphyrinogen III: step 1/1. The protein operates within porphyrin-containing compound metabolism; siroheme biosynthesis; siroheme from sirohydrochlorin: step 1/1. It functions in the pathway porphyrin-containing compound metabolism; siroheme biosynthesis; sirohydrochlorin from precorrin-2: step 1/1. Its function is as follows. Multifunctional enzyme that catalyzes the SAM-dependent methylations of uroporphyrinogen III at position C-2 and C-7 to form precorrin-2 via precorrin-1. Then it catalyzes the NAD-dependent ring dehydrogenation of precorrin-2 to yield sirohydrochlorin. Finally, it catalyzes the ferrochelation of sirohydrochlorin to yield siroheme. The polypeptide is Siroheme synthase (Salmonella arizonae (strain ATCC BAA-731 / CDC346-86 / RSK2980)).